Here is a 532-residue protein sequence, read N- to C-terminus: Cytochrome c oxidase subunit 1 (532 aa).

The next 3 helical transmembrane spans lie at 1–21 (MWDY…AYAA), 27–47 (LPYM…LIWV), and 69–89 (GVIA…VIAF). Heme b is bound at residue His114. Helical transmembrane passes span 115-135 (TSAV…FYVV), 143-163 (LFGG…IIVT), 185-205 (LDIL…GTIF), 212-232 (IYVA…LHIV), 263-283 (GHNA…YYFV), 296-316 (LSIV…PHHL), 328-348 (LGMV…INGL), and 366-386 (MMVV…MMSI). Cu cation is bound by residues His264, His314, and His315. His402 and His404 together coordinate heme b. 3 helical membrane passes run 403-423 (VHSG…YFLT), 442-462 (FWLA…TGIM), and 496-516 (VGGV…WATV).

The protein belongs to the heme-copper respiratory oxidase family. Cu(2+) serves as cofactor. It depends on heme b as a cofactor.

The protein localises to the cell membrane. The enzyme catalyses 4 Fe(II)-[cytochrome c] + O2 + 8 H(+)(in) = 4 Fe(III)-[cytochrome c] + 2 H2O + 4 H(+)(out). It functions in the pathway energy metabolism; oxidative phosphorylation. In terms of biological role, cytochrome c oxidase is the component of the respiratory chain that catalyzes the reduction of oxygen to water. Subunits 1-3 form the functional core of the enzyme complex. Co I is the catalytic subunit of the enzyme. Electrons originating in cytochrome c are transferred via the copper A center of subunit 2 and heme a of subunit 1 to the bimetallic center formed by heme a3 and copper B. This cytochrome c oxidase shows proton pump activity across the membrane in addition to the electron transfer. The sequence is that of Cytochrome c oxidase subunit 1 (ctaD) from Rhodobacter capsulatus (Rhodopseudomonas capsulata).